A 136-amino-acid polypeptide reads, in one-letter code: Small ribosomal subunit protein eS6 (136 aa).

It belongs to the eukaryotic ribosomal protein eS6 family.

This chain is Small ribosomal subunit protein eS6, found in Methanosarcina mazei (strain ATCC BAA-159 / DSM 3647 / Goe1 / Go1 / JCM 11833 / OCM 88) (Methanosarcina frisia).